Consider the following 209-residue polypeptide: Uracil phosphoribosyltransferase (209 aa).

5-phospho-alpha-D-ribose 1-diphosphate-binding positions include arginine 79, arginine 104, and 131–139 (DPMLATGGS). Uracil contacts are provided by residues isoleucine 194 and 199–201 (GDA). Aspartate 200 provides a ligand contact to 5-phospho-alpha-D-ribose 1-diphosphate.

Belongs to the UPRTase family. It depends on Mg(2+) as a cofactor.

It carries out the reaction UMP + diphosphate = 5-phospho-alpha-D-ribose 1-diphosphate + uracil. Its pathway is pyrimidine metabolism; UMP biosynthesis via salvage pathway; UMP from uracil: step 1/1. Its activity is regulated as follows. Allosterically activated by GTP. In terms of biological role, catalyzes the conversion of uracil and 5-phospho-alpha-D-ribose 1-diphosphate (PRPP) to UMP and diphosphate. This is Uracil phosphoribosyltransferase from Anoxybacillus flavithermus (strain DSM 21510 / WK1).